Reading from the N-terminus, the 158-residue chain is Endoribonuclease YbeY (158 aa).

Zn(2+)-binding residues include His124, His128, and His134.

The protein belongs to the endoribonuclease YbeY family. The cofactor is Zn(2+).

It is found in the cytoplasm. Its function is as follows. Single strand-specific metallo-endoribonuclease involved in late-stage 70S ribosome quality control and in maturation of the 3' terminus of the 16S rRNA. The chain is Endoribonuclease YbeY from Caldanaerobacter subterraneus subsp. tengcongensis (strain DSM 15242 / JCM 11007 / NBRC 100824 / MB4) (Thermoanaerobacter tengcongensis).